The primary structure comprises 145 residues: Deoxyuridine 5'-triphosphate nucleotidohydrolase (145 aa).

The protein belongs to the dUTPase family. Mg(2+) serves as cofactor.

It carries out the reaction dUTP + H2O = dUMP + diphosphate + H(+). Its function is as follows. This enzyme is involved in nucleotide metabolism: it produces dUMP, the immediate precursor of thymidine nucleotides and it decreases the intracellular concentration of dUTP so that uracil cannot be incorporated into DNA. This Fowlpox virus (strain NVSL) (FPV) protein is Deoxyuridine 5'-triphosphate nucleotidohydrolase (DUT).